The sequence spans 248 residues: Probable transcriptional regulatory protein Dde_2325 (248 aa).

Positions 1–15 (MAGHSKWKNIQHRKG) are enriched in basic residues. Residues 1–22 (MAGHSKWKNIQHRKGRQDAKKS) form a disordered region.

The protein belongs to the TACO1 family.

The protein resides in the cytoplasm. This is Probable transcriptional regulatory protein Dde_2325 from Oleidesulfovibrio alaskensis (strain ATCC BAA-1058 / DSM 17464 / G20) (Desulfovibrio alaskensis).